Here is a 316-residue protein sequence, read N- to C-terminus: GPI-specific phospholipase A2-like PGAP3 (316 aa).

Positions 1 to 18 (MAPFLVLFLAGVVAASRG) are cleaved as a signal peptide. Residues 19–93 (DREPVYRDCV…QFHGKWPFSR (75 aa)) are Lumenal-facing. N-linked (GlcNAc...) asparagine glycosylation is present at asparagine 35. The helical transmembrane segment at 94 to 114 (FLFFQEPASALASFLNGVASL) threads the bilayer. Over 115-132 (LMLLRYRSSVPSSCQMYR) the chain is Cytoplasmic. A helical membrane pass occupies residues 133 to 153 (TCLAFSMVSVNAWFWSTIFHT). Over 154–163 (RDTALTEKMD) the chain is Lumenal. The helical transmembrane segment at 164–180 (YFCASSVILHSIYLCCM) threads the bilayer. Topologically, residues 181 to 182 (RT) are cytoplasmic. Residues 183–203 (FGLQYPSIANGFGAFLVLLFA) form a helical membrane-spanning segment. The Lumenal portion of the chain corresponds to 204-218 (CHVSYLTLGRFDYSY). A helical transmembrane segment spans residues 219-239 (NMAANTGFGVLNLMWWLAWCF). The Cytoplasmic portion of the chain corresponds to 240–251 (RRRFHQPYLWKC). The chain crosses the membrane as a helical span at residues 252-272 (VLVVISLQSLALLELLDFPPV). Residue methionine 273 is a topological domain, lumenal. A helical transmembrane segment spans residues 274-293 (WILDAHALWHFSTVPLHFLF). The Cytoplasmic portion of the chain corresponds to 294-316 (YSFLKDDSLYLLKINHDDIPKLD).

The protein belongs to the PGAP3 family.

Its subcellular location is the golgi apparatus membrane. In terms of biological role, involved in the fatty acid remodeling steps of GPI-anchor maturation where the unsaturated acyl chain at sn-2 of inositol phosphate is replaced by a saturated stearoyl chain. May catalyze the first step of the fatty acid remodeling, by removing the unsaturated acyl chain at sn-2 of inositol phosphate, generating a lyso-GPI intermediate. The fatty acid remodeling steps is critical for the integration of GPI-APs into lipid rafts. The polypeptide is GPI-specific phospholipase A2-like PGAP3 (Xenopus tropicalis (Western clawed frog)).